The chain runs to 427 residues: Gamma-glutamyl phosphate reductase (427 aa).

This sequence belongs to the gamma-glutamyl phosphate reductase family.

Its subcellular location is the cytoplasm. The enzyme catalyses L-glutamate 5-semialdehyde + phosphate + NADP(+) = L-glutamyl 5-phosphate + NADPH + H(+). The protein operates within amino-acid biosynthesis; L-proline biosynthesis; L-glutamate 5-semialdehyde from L-glutamate: step 2/2. Catalyzes the NADPH-dependent reduction of L-glutamate 5-phosphate into L-glutamate 5-semialdehyde and phosphate. The product spontaneously undergoes cyclization to form 1-pyrroline-5-carboxylate. The chain is Gamma-glutamyl phosphate reductase from Gluconobacter oxydans (strain 621H) (Gluconobacter suboxydans).